A 138-amino-acid chain; its full sequence is uncharacterized protein (138 aa).

An N-terminal signal peptide occupies residues 1-37; the sequence is MNSTFTSQPLLNRSEPRVFKEFYRLVIGCNPAWQVMA.

To H.influenzae HI_1631.

This is an uncharacterized protein from Sinorhizobium fredii (strain NBRC 101917 / NGR234).